We begin with the raw amino-acid sequence, 117 residues long: Large ribosomal subunit protein uL18 (117 aa).

It belongs to the universal ribosomal protein uL18 family. As to quaternary structure, part of the 50S ribosomal subunit; part of the 5S rRNA/L5/L18/L25 subcomplex. Contacts the 5S and 23S rRNAs.

In terms of biological role, this is one of the proteins that bind and probably mediate the attachment of the 5S RNA into the large ribosomal subunit, where it forms part of the central protuberance. In Coxiella burnetii (strain CbuK_Q154) (Coxiella burnetii (strain Q154)), this protein is Large ribosomal subunit protein uL18.